Reading from the N-terminus, the 299-residue chain is Oxygen-dependent coproporphyrinogen-III oxidase (299 aa).

Serine 92 provides a ligand contact to substrate. The Mn(2+) site is built by histidine 96 and histidine 106. Histidine 106 acts as the Proton donor in catalysis. Residue 108–110 (NVR) participates in substrate binding. Mn(2+) is bound by residues histidine 145 and histidine 175. Residues 240 to 275 (YVEFNLVWDRGTLFGLQTGGRTESILMSMPPLVRWE) are important for dimerization. Position 258-260 (258-260 (GGR)) interacts with substrate.

This sequence belongs to the aerobic coproporphyrinogen-III oxidase family. In terms of assembly, homodimer. The cofactor is Mn(2+).

Its subcellular location is the cytoplasm. The catalysed reaction is coproporphyrinogen III + O2 + 2 H(+) = protoporphyrinogen IX + 2 CO2 + 2 H2O. It functions in the pathway porphyrin-containing compound metabolism; protoporphyrin-IX biosynthesis; protoporphyrinogen-IX from coproporphyrinogen-III (O2 route): step 1/1. Its function is as follows. Involved in the heme biosynthesis. Catalyzes the aerobic oxidative decarboxylation of propionate groups of rings A and B of coproporphyrinogen-III to yield the vinyl groups in protoporphyrinogen-IX. This chain is Oxygen-dependent coproporphyrinogen-III oxidase, found in Escherichia coli O7:K1 (strain IAI39 / ExPEC).